Consider the following 360-residue polypeptide: Peptide chain release factor 1 (360 aa).

Q235 bears the N5-methylglutamine mark. Residues 284 to 313 (AKRQQAEASTRRNLLGSGDRSDRNRTYNFP) are disordered.

It belongs to the prokaryotic/mitochondrial release factor family. In terms of processing, methylated by PrmC. Methylation increases the termination efficiency of RF1.

It localises to the cytoplasm. Functionally, peptide chain release factor 1 directs the termination of translation in response to the peptide chain termination codons UAG and UAA. This Salmonella agona (strain SL483) protein is Peptide chain release factor 1.